The chain runs to 232 residues: Large ribosomal subunit protein uL1 (232 aa).

This sequence belongs to the universal ribosomal protein uL1 family. As to quaternary structure, part of the 50S ribosomal subunit.

Functionally, binds directly to 23S rRNA. The L1 stalk is quite mobile in the ribosome, and is involved in E site tRNA release. Protein L1 is also a translational repressor protein, it controls the translation of the L11 operon by binding to its mRNA. The chain is Large ribosomal subunit protein uL1 from Bacillus licheniformis (strain ATCC 14580 / DSM 13 / JCM 2505 / CCUG 7422 / NBRC 12200 / NCIMB 9375 / NCTC 10341 / NRRL NRS-1264 / Gibson 46).